A 152-amino-acid chain; its full sequence is UPF0266 membrane protein YobD (152 aa).

3 consecutive transmembrane segments (helical) span residues leucine 6–methionine 26, valine 45–histidine 65, and alanine 67–isoleucine 87.

This sequence belongs to the UPF0266 family.

It is found in the cell inner membrane. The protein is UPF0266 membrane protein YobD of Salmonella paratyphi C (strain RKS4594).